The primary structure comprises 292 residues: Protease HtpX (292 aa).

Transmembrane regions (helical) follow at residues 4 to 24 (IVLFLLTNLAVMLIFSLILFL) and 32 to 52 (IYGLLIMSGLFGFSGSILSLI). His139 serves as a coordination point for Zn(2+). Glu140 is a catalytic residue. His143 provides a ligand contact to Zn(2+). The next 2 membrane-spanning stretches (helical) occupy residues 147 to 167 (GDMITMTLVQGVVNTFVIFIS) and 193 to 213 (FVYFLVSTFLELIFGILASII). Glu222 serves as a coordination point for Zn(2+).

Belongs to the peptidase M48B family. The cofactor is Zn(2+).

Its subcellular location is the cell membrane. The protein is Protease HtpX of Buchnera aphidicola subsp. Acyrthosiphon pisum (strain 5A).